A 332-amino-acid chain; its full sequence is Lipoyl synthase (332 aa).

[4Fe-4S] cluster is bound by residues Cys-74, Cys-79, Cys-85, Cys-100, Cys-104, Cys-107, and Ser-314. The Radical SAM core domain occupies 85 to 303 (CFGKGTATFM…EEEAYKMGFT (219 aa)).

Belongs to the radical SAM superfamily. Lipoyl synthase family. [4Fe-4S] cluster serves as cofactor.

It localises to the cytoplasm. It catalyses the reaction [[Fe-S] cluster scaffold protein carrying a second [4Fe-4S](2+) cluster] + N(6)-octanoyl-L-lysyl-[protein] + 2 oxidized [2Fe-2S]-[ferredoxin] + 2 S-adenosyl-L-methionine + 4 H(+) = [[Fe-S] cluster scaffold protein] + N(6)-[(R)-dihydrolipoyl]-L-lysyl-[protein] + 4 Fe(3+) + 2 hydrogen sulfide + 2 5'-deoxyadenosine + 2 L-methionine + 2 reduced [2Fe-2S]-[ferredoxin]. Its pathway is protein modification; protein lipoylation via endogenous pathway; protein N(6)-(lipoyl)lysine from octanoyl-[acyl-carrier-protein]: step 2/2. Functionally, catalyzes the radical-mediated insertion of two sulfur atoms into the C-6 and C-8 positions of the octanoyl moiety bound to the lipoyl domains of lipoate-dependent enzymes, thereby converting the octanoylated domains into lipoylated derivatives. The polypeptide is Lipoyl synthase (Paracidovorax citrulli (strain AAC00-1) (Acidovorax citrulli)).